Here is a 185-residue protein sequence, read N- to C-terminus: Translation initiation factor IF-3 (185 aa).

It belongs to the IF-3 family. As to quaternary structure, monomer.

The protein localises to the cytoplasm. Its function is as follows. IF-3 binds to the 30S ribosomal subunit and shifts the equilibrium between 70S ribosomes and their 50S and 30S subunits in favor of the free subunits, thus enhancing the availability of 30S subunits on which protein synthesis initiation begins. The polypeptide is Translation initiation factor IF-3 (Coxiella burnetii (strain RSA 493 / Nine Mile phase I)).